A 380-amino-acid chain; its full sequence is tRNA-specific 2-thiouridylase MnmA (380 aa).

Residues 25–32 and Met-51 each bind ATP; that span reads AMSGGVDS. Catalysis depends on Cys-119, which acts as the Nucleophile. A disulfide bridge links Cys-119 with Cys-216. Gly-143 lines the ATP pocket. The interaction with tRNA stretch occupies residues 166–168; sequence KDQ. Residue Cys-216 is the Cysteine persulfide intermediate of the active site. An interaction with tRNA region spans residues 320-321; it reads RY.

It belongs to the MnmA/TRMU family.

It is found in the cytoplasm. The enzyme catalyses S-sulfanyl-L-cysteinyl-[protein] + uridine(34) in tRNA + AH2 + ATP = 2-thiouridine(34) in tRNA + L-cysteinyl-[protein] + A + AMP + diphosphate + H(+). Its function is as follows. Catalyzes the 2-thiolation of uridine at the wobble position (U34) of tRNA, leading to the formation of s(2)U34. This chain is tRNA-specific 2-thiouridylase MnmA, found in Deinococcus radiodurans (strain ATCC 13939 / DSM 20539 / JCM 16871 / CCUG 27074 / LMG 4051 / NBRC 15346 / NCIMB 9279 / VKM B-1422 / R1).